The following is a 207-amino-acid chain: GTP-binding protein RHO1 (207 aa).

18 to 25 (GDGACGKT) contributes to the GTP binding site. Positions 40 to 48 (YVPTVFDNY) match the Effector region motif. Residues 65-69 (DTAGQ) and 123-126 (CKAD) contribute to the GTP site. Positions 187 to 207 (GKQGKSKAKSDKKKKKKCVVL) are disordered. Over residues 190-207 (GKSKAKSDKKKKKKCVVL) the composition is skewed to basic residues. Position 204 is a cysteine methyl ester (Cys204). Cys204 carries the S-geranylgeranyl cysteine lipid modification. Positions 205-207 (VVL) are cleaved as a propeptide — removed in mature form.

Belongs to the small GTPase superfamily. Rho family.

The protein localises to the cell membrane. Functionally, involved in the regulation of actin polarization. Rho proteins are required for distinct steps during polarized hyphal growth of A.gossypii. This is GTP-binding protein RHO1 (RHO1) from Eremothecium gossypii (strain ATCC 10895 / CBS 109.51 / FGSC 9923 / NRRL Y-1056) (Yeast).